The chain runs to 226 residues: Ribonuclease 3 (226 aa).

The 123-residue stretch at 7-129 (LPRLCRTLGY…IIGAIYLDSD (123 aa)) folds into the RNase III domain. Glutamate 42 is a Mg(2+) binding site. Aspartate 46 is an active-site residue. Positions 115 and 118 each coordinate Mg(2+). Glutamate 118 is an active-site residue. Residues 156 to 226 (DAKTLLQEYL…AAQVLELLKK (71 aa)) form the DRBM domain.

This sequence belongs to the ribonuclease III family. Homodimer. The cofactor is Mg(2+).

It localises to the cytoplasm. It carries out the reaction Endonucleolytic cleavage to 5'-phosphomonoester.. Digests double-stranded RNA. Involved in the processing of primary rRNA transcript to yield the immediate precursors to the large and small rRNAs (23S and 16S). Processes some mRNAs, and tRNAs when they are encoded in the rRNA operon. Processes pre-crRNA and tracrRNA of type II CRISPR loci if present in the organism. This Shewanella sp. (strain W3-18-1) protein is Ribonuclease 3.